A 419-amino-acid chain; its full sequence is D-amino acid dehydrogenase (419 aa).

3-17 (VLVLGAGVAGVSSVW) lines the FAD pocket.

This sequence belongs to the DadA oxidoreductase family. FAD serves as cofactor.

It carries out the reaction a D-alpha-amino acid + A + H2O = a 2-oxocarboxylate + AH2 + NH4(+). Its pathway is amino-acid degradation; D-alanine degradation; NH(3) and pyruvate from D-alanine: step 1/1. Functionally, oxidative deamination of D-amino acids. This Neisseria gonorrhoeae (strain ATCC 700825 / FA 1090) protein is D-amino acid dehydrogenase.